The sequence spans 143 residues: Mediator of RNA polymerase II transcription subunit 9 (143 aa).

Residues 84 to 141 (QDCNHKIFELQKRFESAREQIRQLPGIDYNKDEQLQRLELLRNQFKLKQQLIRKYKDT) are a coiled coil.

Belongs to the Mediator complex subunit 9 family. In terms of assembly, component of the Mediator complex.

It is found in the nucleus. Component of the Mediator complex, a coactivator involved in the regulated transcription of nearly all RNA polymerase II-dependent genes. Mediator functions as a bridge to convey information from gene-specific regulatory proteins to the basal RNA polymerase II transcription machinery. Mediator is recruited to promoters by direct interactions with regulatory proteins and serves as a scaffold for the assembly of a functional preinitiation complex with RNA polymerase II and the general transcription factors. This Drosophila pseudoobscura pseudoobscura (Fruit fly) protein is Mediator of RNA polymerase II transcription subunit 9 (MED9).